A 357-amino-acid polypeptide reads, in one-letter code: Phosphoribosylformylglycinamidine cyclo-ligase (357 aa).

This sequence belongs to the AIR synthase family.

The protein resides in the cytoplasm. It catalyses the reaction 2-formamido-N(1)-(5-O-phospho-beta-D-ribosyl)acetamidine + ATP = 5-amino-1-(5-phospho-beta-D-ribosyl)imidazole + ADP + phosphate + H(+). Its pathway is purine metabolism; IMP biosynthesis via de novo pathway; 5-amino-1-(5-phospho-D-ribosyl)imidazole from N(2)-formyl-N(1)-(5-phospho-D-ribosyl)glycinamide: step 2/2. The sequence is that of Phosphoribosylformylglycinamidine cyclo-ligase from Rhizobium leguminosarum.